The sequence spans 627 residues: Protein EXECUTER 2, chloroplastic (627 aa).

Disordered stretches follow at residues 1 to 34 (MSAA…PSAA), 212 to 277 (PTKG…AKDS), and 308 to 359 (EAEL…SKSP). The N-terminal 45 residues, 1 to 45 (MSAATACASPAAARPPLHIPLRSPPSAAHLPSAAASRRASSAACR), are a transit peptide targeting the chloroplast. Low complexity predominate over residues 217 to 229 (SSASSVSSATAES). Composition is skewed to acidic residues over residues 308 to 321 (EAEL…ELVQ) and 331 to 353 (SLED…SDSA).

It localises to the plastid. The protein resides in the chloroplast. In terms of biological role, together with EX1, enables higher plants to perceive singlet oxygen as a stress signal in plastid that activates a genetically determined nuclear stress response program which triggers a programmed cell death (PCD). This transfer of singlet oxygen-induced stress-related signals from the plastid to the nucleus that triggers genetically controlled PCD pathway is unique to photosynthetic eukaryotes and operates under mild stress conditions, impeding photosystem II (PSII) without causing photooxidative damage of the plant. In Oryza sativa subsp. japonica (Rice), this protein is Protein EXECUTER 2, chloroplastic.